Reading from the N-terminus, the 765-residue chain is Probable serine/threonine-protein kinase DDB_G0271402 (765 aa).

Residues 35 to 328 enclose the Protein kinase domain; sequence LEFGQEIGKG…KEITERLKSL (294 aa). Residues 41–49 and lysine 62 each bind ATP; that span reads IGKGAYGKI. The active-site Proton acceptor is aspartate 192. 7 disordered regions span residues 371–393, 443–477, 491–527, 545–620, 654–684, 699–738, and 746–765; these read IVHNNHNHSSSSNNSSGYNNNSN, SMGDESDLDSDDEDDSYTSSASSSRCNSRNGKIIN, SSDLESSPNGNNINNNNNNNNNNNNNNNNNNNNNNNS, PIQI…QQYQ, PLNISPTQNNNNNNNNSNNNNGNVNHNHHHL, IISSSSTTSSSTSTPSLVSLTSSRDHHHHHISVTSSPTNI, and ASNSSVFTPLGSGLTRTVQS. A compositionally biased stretch (acidic residues) spans 446–458; it reads DESDLDSDDEDDS. Composition is skewed to low complexity over residues 459–470, 499–527, 562–605, 662–678, and 699–720; these read YTSSASSSRCNS, NGNNINNNNNNNNNNNNNNNNNNNNNNNS, PPTS…PKSN, NNNNNNNNSNNNNGNVN, and IISSSSTTSSSTSTPSLVSLTS.

Belongs to the protein kinase superfamily. TKL Ser/Thr protein kinase family.

It carries out the reaction L-seryl-[protein] + ATP = O-phospho-L-seryl-[protein] + ADP + H(+). The catalysed reaction is L-threonyl-[protein] + ATP = O-phospho-L-threonyl-[protein] + ADP + H(+). The polypeptide is Probable serine/threonine-protein kinase DDB_G0271402 (Dictyostelium discoideum (Social amoeba)).